Here is a 405-residue protein sequence, read N- to C-terminus: Deoxyguanosinetriphosphate triphosphohydrolase-like protein (405 aa).

The 145-residue stretch at 75 to 219 (RLTHTIEVAQ…AAIADDIAYN (145 aa)) folds into the HD domain.

Belongs to the dGTPase family. Type 2 subfamily.

In Rhizobium etli (strain ATCC 51251 / DSM 11541 / JCM 21823 / NBRC 15573 / CFN 42), this protein is Deoxyguanosinetriphosphate triphosphohydrolase-like protein.